The following is a 133-amino-acid chain: Protein NrdI (133 aa).

It belongs to the NrdI family.

Probably involved in ribonucleotide reductase function. The protein is Protein NrdI of Escherichia coli O17:K52:H18 (strain UMN026 / ExPEC).